The chain runs to 139 residues: uncharacterized protein (139 aa).

The region spanning 9 to 133 (QAAQIRIARP…DGWRIVFMNS (125 aa)) is the VOC domain.

This is an uncharacterized protein from Bacillus subtilis (strain 168).